Consider the following 347-residue polypeptide: MTLDHQIINPTLKWSQPAVPSGGPLVQHAHTTLDSDAGLTENPLTKLLAIGKEDDNAQWHMEDVIEDIIGMESSFKEEGADSPLLMQRTLSGSILDVYSGEQGISPINMGLTSASCPSSLPMKREITETDTRALAKERQKKDNHNLIERRRRYNINYRIKELGTLIPKSNDPDMRWNKGTILKASVEYIKWLQKEQQRARELEHRQKKLEQANRRLLLRIQELEIQARTHGLPTLASLGTVDLGAHVTKQQSHPEQNSVDYCQQLTVSQRPSPEFCDQAIAFSDPLSYFTDLSFSAALKEEQRLDGMLLDDTISPFGTDPLLSATSPAVSKESSRRSSFSSDDGDEL.

A necessary for transcriptional transactivation region spans residues 1-119 (MTLDHQIINP…GLTSASCPSS (119 aa)). A bHLH domain is found at 139-192 (QKKDNHNLIERRRRYNINYRIKELGTLIPKSNDPDMRWNKGTILKASVEYIKWL). Positions 271–347 (PSPEFCDQAI…SFSSDDGDEL (77 aa)) are necessary for transcriptional transactivation. A disordered region spans residues 319–347 (DPLLSATSPAVSKESSRRSSFSSDDGDEL). Positions 326–341 (SPAVSKESSRRSSFSS) are enriched in low complexity.

Belongs to the MiT/TFE family. Homodimer. Forms heterodimers with MITF and TFE3. Interacts with MITF.

It is found in the nucleus. In terms of biological role, transcriptional regulator that acts as a repressor or an activator. Acts as a transcriptional repressor on minimal promoter containing element F (that includes an E-box sequence). Binds to element F in an E-box sequence-specific manner. Acts as a transcriptional transactivator on the proximal promoter region of the tartrate-resistant acid phosphatase (TRAP) E-box containing promoter. Collaborates with MITF in target gene activation. Acts as a transcriptional repressor on minimal promoter containing mu E3 enhancer sequence. Binds to mu E3 DNA sequence of the immunoglobulin heavy-chain gene enhancer. Binds DNA in a homo- or heterodimeric form. The chain is Transcription factor EC (TFEC) from Pan troglodytes (Chimpanzee).